We begin with the raw amino-acid sequence, 330 residues long: 6-phosphogluconolactonase (330 aa).

This sequence belongs to the cycloisomerase 2 family.

The catalysed reaction is 6-phospho-D-glucono-1,5-lactone + H2O = 6-phospho-D-gluconate + H(+). It participates in carbohydrate degradation; pentose phosphate pathway; D-ribulose 5-phosphate from D-glucose 6-phosphate (oxidative stage): step 2/3. In terms of biological role, catalyzes the hydrolysis of 6-phosphogluconolactone to 6-phosphogluconate. This chain is 6-phosphogluconolactonase, found in Erwinia tasmaniensis (strain DSM 17950 / CFBP 7177 / CIP 109463 / NCPPB 4357 / Et1/99).